A 337-amino-acid chain; its full sequence is F-box protein At2g27310 (337 aa).

The F-box domain occupies 10–58 (DSISTLHSDIIQTQILTRLDGPTLASTATTSSYLQTLCTEEKLWQELSI).

The chain is F-box protein At2g27310 from Arabidopsis thaliana (Mouse-ear cress).